Here is a 102-residue protein sequence, read N- to C-terminus: Small ribosomal subunit protein uS10 (102 aa).

The protein belongs to the universal ribosomal protein uS10 family. In terms of assembly, part of the 30S ribosomal subunit.

In terms of biological role, involved in the binding of tRNA to the ribosomes. The sequence is that of Small ribosomal subunit protein uS10 from Leuconostoc citreum (strain KM20).